We begin with the raw amino-acid sequence, 312 residues long: MANIVFKLSDKDITTLMSRITFDTENLPQGMKARAKYQNTTVNIYQSGKVMFQGNHAEAVSKELLPQHSQLNTNKTKKKNMANSFLEQTLMYDQFNCIGSDEAGSGDYFGPLTVCAAFVTKEHVPILKTLGVDDSKKLTDTKIVELAEQLVTFIPHSLLTLHNEKYNIQQAKGWTQVKMKAVLHNEAIKNVLEKIDSSQLDYIVIDQFAKREVYNHYALSDIPLPKKTKFETKGESKSLAIAVASIISRYAFVTYMDQISKNINMTIPKGAGAKVDVIAAKIIKKYGLSHLDTISKKHFKNREKAQKILKPL.

The region spanning 95–311 (FNCIGSDEAG…REKAQKILKP (217 aa)) is the RNase H type-2 domain. Positions 101, 102, and 206 each coordinate a divalent metal cation.

It belongs to the RNase HII family. RnhC subfamily. Mn(2+) serves as cofactor. Requires Mg(2+) as cofactor.

The protein localises to the cytoplasm. The catalysed reaction is Endonucleolytic cleavage to 5'-phosphomonoester.. Endonuclease that specifically degrades the RNA of RNA-DNA hybrids. The protein is Ribonuclease HIII of Staphylococcus aureus (strain MW2).